A 234-amino-acid chain; its full sequence is 2-C-methyl-D-erythritol 4-phosphate cytidylyltransferase (234 aa).

This sequence belongs to the IspD/TarI cytidylyltransferase family. IspD subfamily.

It carries out the reaction 2-C-methyl-D-erythritol 4-phosphate + CTP + H(+) = 4-CDP-2-C-methyl-D-erythritol + diphosphate. The protein operates within isoprenoid biosynthesis; isopentenyl diphosphate biosynthesis via DXP pathway; isopentenyl diphosphate from 1-deoxy-D-xylulose 5-phosphate: step 2/6. In terms of biological role, catalyzes the formation of 4-diphosphocytidyl-2-C-methyl-D-erythritol from CTP and 2-C-methyl-D-erythritol 4-phosphate (MEP). The protein is 2-C-methyl-D-erythritol 4-phosphate cytidylyltransferase of Desulforamulus reducens (strain ATCC BAA-1160 / DSM 100696 / MI-1) (Desulfotomaculum reducens).